The primary structure comprises 347 residues: tRNA dimethylallyltransferase (347 aa).

Residue 20–27 (GPTASGKT) coordinates ATP. Residue 22–27 (TASGKT) participates in substrate binding. 3 interaction with substrate tRNA regions span residues 45-48 (DSAM), 169-173 (QRLMR), and 275-280 (RCVGYR).

It belongs to the IPP transferase family. Monomer. Requires Mg(2+) as cofactor.

The enzyme catalyses adenosine(37) in tRNA + dimethylallyl diphosphate = N(6)-dimethylallyladenosine(37) in tRNA + diphosphate. In terms of biological role, catalyzes the transfer of a dimethylallyl group onto the adenine at position 37 in tRNAs that read codons beginning with uridine, leading to the formation of N6-(dimethylallyl)adenosine (i(6)A). This is tRNA dimethylallyltransferase from Marinobacter nauticus (strain ATCC 700491 / DSM 11845 / VT8) (Marinobacter aquaeolei).